We begin with the raw amino-acid sequence, 179 residues long: ATP-dependent protease subunit HslV (179 aa).

Threonine 7 is a catalytic residue. Na(+) is bound by residues glycine 162, cysteine 165, and threonine 168.

It belongs to the peptidase T1B family. HslV subfamily. A double ring-shaped homohexamer of HslV is capped on each side by a ring-shaped HslU homohexamer. The assembly of the HslU/HslV complex is dependent on binding of ATP.

The protein localises to the cytoplasm. It catalyses the reaction ATP-dependent cleavage of peptide bonds with broad specificity.. Its activity is regulated as follows. Allosterically activated by HslU binding. In terms of biological role, protease subunit of a proteasome-like degradation complex believed to be a general protein degrading machinery. This chain is ATP-dependent protease subunit HslV, found in Bordetella avium (strain 197N).